The primary structure comprises 323 residues: tRNA U34 carboxymethyltransferase (323 aa).

Residues Lys-91, Trp-105, Lys-110, Gly-130, 181–182 (IE), Met-196, Tyr-200, and Arg-315 contribute to the carboxy-S-adenosyl-L-methionine site.

It belongs to the class I-like SAM-binding methyltransferase superfamily. CmoB family. Homotetramer.

The enzyme catalyses carboxy-S-adenosyl-L-methionine + 5-hydroxyuridine(34) in tRNA = 5-carboxymethoxyuridine(34) in tRNA + S-adenosyl-L-homocysteine + H(+). In terms of biological role, catalyzes carboxymethyl transfer from carboxy-S-adenosyl-L-methionine (Cx-SAM) to 5-hydroxyuridine (ho5U) to form 5-carboxymethoxyuridine (cmo5U) at position 34 in tRNAs. The protein is tRNA U34 carboxymethyltransferase of Edwardsiella ictaluri (strain 93-146).